The following is a 462-amino-acid chain: MAKFRRRTCILLSLFILFIFSLMMGLKMLWPNAASFGPPFGLDLLPELHPLNAHSGNKADFQRSDRINMETNTKALKGAGMTVLPAKASEVNLEELPPLNYFLHAFYYSWYGNPQFDGKYIHWNHPVLEHWDPRIAKNYPQGQHSPPDDIGSSFYPELGSYSSRDPSVIETHMKQMRSASIGVLALSWYPPDSRDDNGEATDHLVPTILDKAHKYNLKVTFHIEPYSNRDDQNMHQNIKYIIDKYGNHPAFYRYKTRTGHSLPMFYVYDSYITKPTIWANLLTPSGSQSVRSSPYDGLFIALLVEEKHKNDILQSGFDGIYTYFATNGFTYGSSHQNWNNLKSFCEKNNLMFIPSVGPGYIDTSIRPWNTQNTRNRVNGKYYEVGLSAALQTHPSLISITSFNEWHEGTQIEKAVPKRTANTIYLDYRPHKPSLYLELTRKWSEKFSKERMTYALDQQQPAS.

Residues 1-9 are Cytoplasmic-facing; it reads MAKFRRRTC. Residues 10-30 traverse the membrane as a helical; Signal-anchor for type II membrane protein segment; sequence ILLSLFILFIFSLMMGLKMLW. At 31–462 the chain is on the lumenal side; sequence PNAASFGPPF…YALDQQQPAS (432 aa). Residues 60–462 are catalytic; the sequence is DFQRSDRINM…YALDQQQPAS (403 aa).

Belongs to the glycosyl hydrolase 99 family. Post-translationally, undergoes proteolytic cleavage in the C-terminal region.

Its subcellular location is the golgi apparatus membrane. The catalysed reaction is N-{alpha-Glc-(1-&gt;3)-alpha-Man-(1-&gt;2)-alpha-Man-(1-&gt;2)-alpha-Man-(1-&gt;3)-[alpha-Man-(1-&gt;2)-alpha-Man-(1-&gt;3)-[alpha-Man-(1-&gt;2)-alpha-Man-(1-&gt;6)]-alpha-Man-(1-&gt;6)]-beta-Man-(1-&gt;4)-beta-GlcNAc-(1-&gt;4)-beta-GlcNAc}-L-asparaginyl-[protein] + H2O = alpha-D-glucosyl-(1-&gt;3)-D-mannopyranose + N(4)-{alpha-D-Man-(1-&gt;2)-alpha-D-Man-(1-&gt;3)-[alpha-D-Man-(1-&gt;2)-alpha-D-Man-(1-&gt;3)-[alpha-D-Man-(1-&gt;2)-alpha-D-Man-(1-&gt;6)]-alpha-D-Man-(1-&gt;6)]-beta-D-Man-(1-&gt;4)-beta-D-GlaNAc-(1-&gt;4)-beta-D-GlcNAc}-L-asparaginyl-[protein] (N-glucan mannose isomer 8A1,2,3B1,2). The polypeptide is Glycoprotein endo-alpha-1,2-mannosidase (Manea) (Mus musculus (Mouse)).